Here is a 271-residue protein sequence, read N- to C-terminus: Short chain dehydrogenase asqE (271 aa).

Residues Ile-22, Asp-70, and Asn-99 each contribute to the NADP(+) site. Catalysis depends on proton donor residues Ser-152 and Ser-153. The NADP(+) site is built by Tyr-167, Lys-171, and Thr-203. Tyr-167 acts as the Proton acceptor in catalysis. The active-site Lowers pKa of active site Tyr is Lys-171.

It belongs to the short-chain dehydrogenases/reductases (SDR) family.

It carries out the reaction a primary alcohol + NAD(+) = an aldehyde + NADH + H(+). The catalysed reaction is a secondary alcohol + NAD(+) = a ketone + NADH + H(+). Its pathway is secondary metabolite biosynthesis. The protein operates within alkaloid biosynthesis. It functions in the pathway mycotoxin biosynthesis. Its function is as follows. Short chain dehydrogenase; part of the gene cluster that mediates the biosynthesis of the aspoquinolone mycotoxins. The role of asqE within the aspoquinolone pathway has still to be determined. The first step of the pathway is catalyzed by the nonribosomal peptide synthetase asqK that condenses anthranilic acid and O-methyl-L-tyrosine to produce 4'-methoxycyclopeptin. 4'-methoxycyclopeptin is then converted to 4'-methoxydehydrocyclopeptin by the ketoglutarate-dependent dioxygenase asqJ. AsqJ also converts its first product 4'-methoxydehydrocyclopeptin to 4'-methoxycyclopenin. The following conversion of 4'-methoxycyclopenin into 4'-methoxyviridicatin is catalyzed by the cyclopenase asqI. 4'-methoxyviridicatin is the precursor of quinolone natural products, and is further converted to quinolinone B. The prenyltransferase asqH1 then catalyzes the canonical Friedel-Crafts alkylation of quinolinone B with dimethylallyl cation to yield dimethylallyl quinolone, which is subjected to FAD-dependent dehydrogenation by the FAD-linked oxidoreductase asqF to yield conjugated aryl diene. The delta(3') double bond then serves as the site of the second alkylation with DMAPP catalyzed by the prenyltransferase asqH2 to yield a carbenium ion intermediate, which can be attacked by H(2)O to yield a styrenyl quinolone containing a C3'-hydroxyprenyl chain. The FAD-dependent monooxygenase asqG performs epoxidation of the terminal C7'-C8' olefin. Finally, after dehydratation of the epoxide at C3 by asqC, the quinolone epoxide rearrangement protein asqO catalyzes an enzymatic 3-exo-tet cyclization to yield the cyclopropyl-THF ring system in aspoquinolone. The chain is Short chain dehydrogenase asqE from Emericella nidulans (strain FGSC A4 / ATCC 38163 / CBS 112.46 / NRRL 194 / M139) (Aspergillus nidulans).